Reading from the N-terminus, the 396-residue chain is Tyrosine--tRNA ligase (396 aa).

The 'HIGH' region signature appears at 42–51; sequence PTAPDIHLGH. Positions 226-230 match the 'KMSKS' region motif; that stretch reads KMSKS. Lys229 provides a ligand contact to ATP. The region spanning 334–395 is the S4 RNA-binding domain; it reads LPIANLLKEA…GKRKFAKIII (62 aa).

Belongs to the class-I aminoacyl-tRNA synthetase family. TyrS type 2 subfamily. As to quaternary structure, homodimer.

Its subcellular location is the cytoplasm. The enzyme catalyses tRNA(Tyr) + L-tyrosine + ATP = L-tyrosyl-tRNA(Tyr) + AMP + diphosphate + H(+). Functionally, catalyzes the attachment of tyrosine to tRNA(Tyr) in a two-step reaction: tyrosine is first activated by ATP to form Tyr-AMP and then transferred to the acceptor end of tRNA(Tyr). This is Tyrosine--tRNA ligase from Francisella tularensis subsp. tularensis (strain SCHU S4 / Schu 4).